The primary structure comprises 29 residues: EVVLDSDGEMLRNGGKYYLSPASPIGGGA.

This sequence belongs to the protease inhibitor I3 (leguminous Kunitz-type inhibitor) family. Monomer and dimer.

Its function is as follows. Inhibits bovine trypsin but not chymotrypsin. Also inhibits trypsin-like enzymes from midgut of several lepidopteran species and inhibits larval development in those species. Has fungicidal activity against yeast C.buinensis. Has a bacteriostatic effect against E.coli. Is not cytotoxic. This Inga vera (River koko) protein is Kunitz-type trypsin inhibitor IVTI.